A 403-amino-acid polypeptide reads, in one-letter code: Zinc finger CCHC domain-containing protein 3 (403 aa).

The interval 1–158 (MATGGGAEEE…PLQDEPAAAA (158 aa)) is disordered. Basic and acidic residues-rich tracts occupy residues 26–38 (ARGE…REKM) and 47–65 (LAEK…REEE). Residues 67–79 (GGGGGSAGLGGPA) are compositionally biased toward gly residues. The segment covering 95–121 (GDPKGRRRDPAGEAVDPRKKKGAAEAG) has biased composition (basic and acidic residues). Over residues 128 to 139 (AAAAAMATPARP) the composition is skewed to low complexity. Phosphotyrosine is present on Tyr201. 3 consecutive CCHC-type zinc fingers follow at residues 335-350 (CFKC…SCTQ), 352-368 (RCFR…YCRK), and 372-387 (CNLC…QCPK).

As to quaternary structure, interacts with CGAS. Interacts with RIGI. Interacts with IFIH1/MDA5.

It localises to the cytoplasm. Its function is as follows. Nucleic acid-binding protein involved in innate immune response to DNA and RNA viruses. Binds DNA and RNA in the cytoplasm and acts by promoting recognition of viral nucleic acids by virus sensors, such as RIGI, IFIH1/MDA5 and CGAS. Acts as a co-sensor for recognition of double-stranded DNA (dsDNA) by cGAS in the cytoplasm, thereby playing a role in innate immune response to cytosolic dsDNA and DNA virus. Binds dsDNA and probably acts by promoting sensing of dsDNA by CGAS, leading to enhance CGAS oligomerization and activation. Promotes sensing of viral RNA by RIGI-like receptors proteins RIGI and IFIH1/MDA5 via two mechanisms: binds double-stranded RNA (dsRNA), enhancing the binding of RIGI and IFIH1/MDA5 to dsRNA and promotes 'Lys-63'-linked ubiquitination and subsequent activation of RIGI and IFIH1/MDA5. The sequence is that of Zinc finger CCHC domain-containing protein 3 from Homo sapiens (Human).